The primary structure comprises 1012 residues: Structural polyprotein (1012 aa).

Residue D30 participates in a divalent metal cation binding. The 243-residue stretch at 513–755 (ADKGYEVVAN…AGRQYDLAMA (243 aa)) folds into the Peptidase S50 domain. S652 (nucleophile) is an active-site residue. K692 is an active-site residue. Residues 971–1012 (EMKHRNPRRAPPKPKPKPNVPTQRPPGRLGRWIRAVSDEDLE) form a disordered region. The segment covering 975–986 (RNPRRAPPKPKP) has biased composition (basic residues). The segment at 1003–1012 (IRAVSDEDLE) is interaction with VP1 protein.

In terms of assembly, homotrimer. A central divalent metal stabilizes the VP2 trimer. Interacts with host ITGA4/ITGB1. Homodimer. Interacts (via C-terminus) with VP1 in the cytoplasm. Interacts with VP2. In terms of processing, specific enzymatic cleavages yield mature proteins. The capsid assembly seems to be regulated by polyprotein processing. The protease VP4 cleaves itself off the polyprotein, thus releasing pre-VP2 and VP3 within the infected cell. During capsid assembly, the C-terminus of pre-VP2 is further processed by VP4, giving rise to VP2, the external capsid protein and three small peptides that all stay closely associated with the capsid.

Its subcellular location is the virion. The protein localises to the host cytoplasm. In terms of biological role, capsid protein VP2 self assembles to form an icosahedral capsid with a T=13 symmetry, about 70 nm in diameter, and consisting of 260 VP2 trimers. The capsid encapsulates the genomic dsRNA. VP2 is also involved in attachment and entry into the host cell by interacting with host ITGA4/ITGB1. The precursor of VP2 plays an important role in capsid assembly. First, pre-VP2 and VP2 oligomers assemble to form a procapsid. Then, the pre-VP2 intermediates may be processed into VP2 proteins by proteolytic cleavage mediated by VP4 to obtain the mature virion. The final capsid is composed of pentamers and hexamers but VP2 has a natural tendency to assemble into all-pentameric structures. Therefore pre-VP2 may be required to allow formation of the hexameric structures. Its function is as follows. Protease VP4 is a serine protease that cleaves the polyprotein into its final products. Pre-VP2 is first partially cleaved, and may be completely processed by VP4 upon capsid maturation. Functionally, capsid protein VP3 plays a key role in virion assembly by providing a scaffold for the capsid made of VP2. May self-assemble to form a T=4-like icosahedral inner-capsid composed of at least 180 trimers. Plays a role in genomic RNA packaging by recruiting VP1 into the capsid and interacting with the dsRNA genome segments to form a ribonucleoprotein complex. Additionally, the interaction of the VP3 C-terminal tail with VP1 removes the inherent structural blockade of the polymerase active site. Thus, VP3 can also function as a transcriptional activator. In terms of biological role, structural peptide 1 is a small peptide derived from pre-VP2 C-terminus. It destabilizes and perforates cell membranes, suggesting a role during entry. Structural peptide 2 is a small peptide derived from pre-VP2 C-terminus. It is not essential for the virus viability, but viral growth is affected when missing. Its function is as follows. Structural peptide 3 is a small peptide derived from pre-VP2 C-terminus. It is not essential for the virus viability, but viral growth is affected when missing. In Avian infectious bursal disease virus (isolate Chicken/UK/UK661/1989) (IBDV), this protein is Structural polyprotein.